Consider the following 312-residue polypeptide: Ribosomal RNA small subunit methyltransferase H (312 aa).

Residues 36–38, D55, F81, D103, and Q110 each bind S-adenosyl-L-methionine; that span reads GGH.

It belongs to the methyltransferase superfamily. RsmH family.

The protein localises to the cytoplasm. It carries out the reaction cytidine(1402) in 16S rRNA + S-adenosyl-L-methionine = N(4)-methylcytidine(1402) in 16S rRNA + S-adenosyl-L-homocysteine + H(+). Functionally, specifically methylates the N4 position of cytidine in position 1402 (C1402) of 16S rRNA. The polypeptide is Ribosomal RNA small subunit methyltransferase H (Marinomonas sp. (strain MWYL1)).